The primary structure comprises 116 residues: Ribonuclease P protein component (116 aa).

Belongs to the RnpA family. As to quaternary structure, consists of a catalytic RNA component (M1 or rnpB) and a protein subunit.

The enzyme catalyses Endonucleolytic cleavage of RNA, removing 5'-extranucleotides from tRNA precursor.. In terms of biological role, RNaseP catalyzes the removal of the 5'-leader sequence from pre-tRNA to produce the mature 5'-terminus. It can also cleave other RNA substrates such as 4.5S RNA. The protein component plays an auxiliary but essential role in vivo by binding to the 5'-leader sequence and broadening the substrate specificity of the ribozyme. This Caldanaerobacter subterraneus subsp. tengcongensis (strain DSM 15242 / JCM 11007 / NBRC 100824 / MB4) (Thermoanaerobacter tengcongensis) protein is Ribonuclease P protein component.